The chain runs to 81 residues: METRALWLMLLVVLVAGSSGIAADYVGLSPSQCMVPANVRVDCGYPSVTSEQCNNRGCCFDSSIPNVPWCFKPLQETECTF.

The first 22 residues, 1–22 (METRALWLMLLVVLVAGSSGIA), serve as a signal peptide directing secretion. The P-type domain occupies 31-74 (SQCMVPANVRVDCGYPSVTSEQCNNRGCCFDSSIPNVPWCFKPL). 3 disulfide bridges follow: Cys33–Cys59, Cys43–Cys58, and Cys53–Cys70.

In terms of assembly, monomer. Homodimer; disulfide-linked. In terms of tissue distribution, expressed in goblet cells of the intestines and colon (at protein level). Expressed abundantly in goblet cells of intestine and colon, and at low levels in stomach. No expression in brain, lung, spleen, kidney, uterus, pancreas, liver, heart or thymus.

It is found in the secreted. The protein localises to the extracellular space. Its subcellular location is the extracellular matrix. It localises to the cytoplasm. Involved in the maintenance and repair of the intestinal mucosa. Promotes the mobility of epithelial cells in healing processes (motogen). In Mus musculus (Mouse), this protein is Trefoil factor 3 (Tff3).